The sequence spans 255 residues: 20 kDa chaperonin, chloroplastic (255 aa).

A chloroplast-targeting transit peptide spans 1–53 (MAATHLTSTSSLTINTLPSFEGLRSASGISKINVSVAYPSFTSRSFRGLVVRA). 2 cpn-10 domain regions span residues 54–156 (ASIT…ILET) and 157–255 (DDVK…AVLS).

The protein belongs to the GroES chaperonin family. Forms stable complexes with CPN60 in the presence of ATP.

The protein localises to the plastid. It localises to the chloroplast. Seems to function only as a co-chaperone, along with cpn60, and in certain cases is essential for the discharge of biologically active proteins from cpn60. The polypeptide is 20 kDa chaperonin, chloroplastic (CPN21) (Spinacia oleracea (Spinach)).